The sequence spans 115 residues: DNA-directed RNA polymerase subunit omega (115 aa).

It belongs to the RNA polymerase subunit omega family. The RNAP catalytic core consists of 2 alpha, 1 beta, 1 beta' and 1 omega subunit. When a sigma factor is associated with the core the holoenzyme is formed, which can initiate transcription.

It carries out the reaction RNA(n) + a ribonucleoside 5'-triphosphate = RNA(n+1) + diphosphate. Functionally, promotes RNA polymerase assembly. Latches the N- and C-terminal regions of the beta' subunit thereby facilitating its interaction with the beta and alpha subunits. This chain is DNA-directed RNA polymerase subunit omega, found in Cutibacterium acnes (strain DSM 16379 / KPA171202) (Propionibacterium acnes).